A 315-amino-acid chain; its full sequence is Phosphatidylglycerol--prolipoprotein diacylglyceryl transferase (315 aa).

A run of 2 helical transmembrane segments spans residues 19–39 (FTIH…VWIL) and 93–113 (VWEG…VAFL). Arginine 141 serves as a coordination point for a 1,2-diacyl-sn-glycero-3-phospho-(1'-sn-glycerol). A run of 2 helical transmembrane segments spans residues 188-208 (LFHP…ALII) and 256-276 (VWTA…LYQY).

It belongs to the Lgt family.

It localises to the cell membrane. It catalyses the reaction L-cysteinyl-[prolipoprotein] + a 1,2-diacyl-sn-glycero-3-phospho-(1'-sn-glycerol) = an S-1,2-diacyl-sn-glyceryl-L-cysteinyl-[prolipoprotein] + sn-glycerol 1-phosphate + H(+). The protein operates within protein modification; lipoprotein biosynthesis (diacylglyceryl transfer). Its function is as follows. Catalyzes the transfer of the diacylglyceryl group from phosphatidylglycerol to the sulfhydryl group of the N-terminal cysteine of a prolipoprotein, the first step in the formation of mature lipoproteins. The sequence is that of Phosphatidylglycerol--prolipoprotein diacylglyceryl transferase from Bifidobacterium longum (strain NCC 2705).